Consider the following 403-residue polypeptide: Large ribosomal subunit protein uL3 (403 aa).

The tract at residues 1–37 (MSHRKFSAPRHGSLGFLPRKRSSRHRGKVKSFPKDDP) is disordered. Ser13 carries the post-translational modification Phosphoserine. A compositionally biased stretch (basic residues) spans 18 to 31 (PRKRSSRHRGKVKS). Lys39 participates in a covalent cross-link: Glycyl lysine isopeptide (Lys-Gly) (interchain with G-Cter in SUMO2). Residue Lys136 is modified to N6-acetyllysine. Residues Lys224 and Lys226 each participate in a glycyl lysine isopeptide (Lys-Gly) (interchain with G-Cter in SUMO2) cross-link. The residue at position 245 (His245) is a Tele-methylhistidine. N6-acetyllysine; alternate is present on residues Lys286 and Lys294. A Glycyl lysine isopeptide (Lys-Gly) (interchain with G-Cter in SUMO2); alternate cross-link involves residue Lys286. A Glycyl lysine isopeptide (Lys-Gly) (interchain with G-Cter in SUMO1); alternate cross-link involves residue Lys294. The residue at position 304 (Ser304) is a Phosphoserine. At Lys366 the chain carries N6-acetyllysine; alternate. Lys366 participates in a covalent cross-link: Glycyl lysine isopeptide (Lys-Gly) (interchain with G-Cter in SUMO2); alternate. Lys373 carries the post-translational modification N6-acetyllysine. Residues Lys386, Lys393, and Lys399 each participate in a glycyl lysine isopeptide (Lys-Gly) (interchain with G-Cter in SUMO2) cross-link.

This sequence belongs to the universal ribosomal protein uL3 family. Component of the large ribosomal subunit. Interacts with DHX33. Constitutively monomethylated at His-245 by METTL18. Methylation at His-245 regulates translation elongation by slowing ribosome traversal on tyrosine codons: slower elongation provides enough time for proper folding of synthesized proteins and prevents cellular aggregation of tyrosine-rich proteins. It is not required for incorporation of RPL3 into ribosomes.

The protein localises to the nucleus. It localises to the nucleolus. Its subcellular location is the cytoplasm. Component of the large ribosomal subunit. The ribosome is a large ribonucleoprotein complex responsible for the synthesis of proteins in the cell. This Rattus norvegicus (Rat) protein is Large ribosomal subunit protein uL3 (Rpl3).